Reading from the N-terminus, the 187-residue chain is Elongation factor P (187 aa).

Belongs to the elongation factor P family.

It is found in the cytoplasm. Its pathway is protein biosynthesis; polypeptide chain elongation. In terms of biological role, involved in peptide bond synthesis. Stimulates efficient translation and peptide-bond synthesis on native or reconstituted 70S ribosomes in vitro. Probably functions indirectly by altering the affinity of the ribosome for aminoacyl-tRNA, thus increasing their reactivity as acceptors for peptidyl transferase. This Mycoplasmopsis pulmonis (strain UAB CTIP) (Mycoplasma pulmonis) protein is Elongation factor P.